A 239-amino-acid polypeptide reads, in one-letter code: Small ribosomal subunit protein eS1 (239 aa).

Residues 1–24 (MAIQPPGSYPQGNKKGKAKKKSGQ) are disordered.

It belongs to the eukaryotic ribosomal protein eS1 family. Component of the small ribosomal subunit. Mature ribosomes consist of a small (40S) and a large (60S) subunit. The 40S subunit contains about 33 different proteins and 1 molecule of RNA (18S). The 60S subunit contains about 49 different proteins and 3 molecules of RNA (25S, 5.8S and 5S).

It is found in the cytoplasm. This Encephalitozoon cuniculi (strain GB-M1) (Microsporidian parasite) protein is Small ribosomal subunit protein eS1.